Consider the following 180-residue polypeptide: ATP synthase subunit delta (180 aa).

This sequence belongs to the ATPase delta chain family. As to quaternary structure, F-type ATPases have 2 components, F(1) - the catalytic core - and F(0) - the membrane proton channel. F(1) has five subunits: alpha(3), beta(3), gamma(1), delta(1), epsilon(1). F(0) has three main subunits: a(1), b(2) and c(10-14). The alpha and beta chains form an alternating ring which encloses part of the gamma chain. F(1) is attached to F(0) by a central stalk formed by the gamma and epsilon chains, while a peripheral stalk is formed by the delta and b chains.

It localises to the cell membrane. Its function is as follows. F(1)F(0) ATP synthase produces ATP from ADP in the presence of a proton or sodium gradient. F-type ATPases consist of two structural domains, F(1) containing the extramembraneous catalytic core and F(0) containing the membrane proton channel, linked together by a central stalk and a peripheral stalk. During catalysis, ATP synthesis in the catalytic domain of F(1) is coupled via a rotary mechanism of the central stalk subunits to proton translocation. This protein is part of the stalk that links CF(0) to CF(1). It either transmits conformational changes from CF(0) to CF(1) or is implicated in proton conduction. This Lactobacillus delbrueckii subsp. bulgaricus (strain ATCC 11842 / DSM 20081 / BCRC 10696 / JCM 1002 / NBRC 13953 / NCIMB 11778 / NCTC 12712 / WDCM 00102 / Lb 14) protein is ATP synthase subunit delta.